A 644-amino-acid chain; its full sequence is 3D-(3,5/4)-trihydroxycyclohexane-1,2-dione hydrolase (644 aa).

E65 provides a ligand contact to thiamine diphosphate. Positions 442–522 (SLPGDLHKVW…INILLFDNAG (81 aa)) are thiamine pyrophosphate binding. Positions 493 and 520 each coordinate Mg(2+).

Belongs to the TPP enzyme family. The cofactor is Mg(2+). Thiamine diphosphate serves as cofactor.

The catalysed reaction is 3D-3,5/4-trihydroxycyclohexane-1,2-dione + H2O = 5-deoxy-D-glucuronate + H(+). Its pathway is polyol metabolism; myo-inositol degradation into acetyl-CoA; acetyl-CoA from myo-inositol: step 3/7. Involved in the cleavage of the C1-C2 bond of 3D-(3,5/4)-trihydroxycyclohexane-1,2-dione (THcHDO) to yield 5-deoxy-glucuronate (5DG). This is 3D-(3,5/4)-trihydroxycyclohexane-1,2-dione hydrolase from Clostridium tetani (strain Massachusetts / E88).